Reading from the N-terminus, the 379-residue chain is Cytochrome b (379 aa).

4 helical membrane-spanning segments follow: residues 33-53 (FGSL…FLAM), 77-98 (WLIR…FIHV), 113-133 (WNIG…GYVL), and 178-198 (FFAF…VHLL). Heme b contacts are provided by His83 and His97. Heme b is bound by residues His182 and His196. An a ubiquinone-binding site is contributed by His201. 4 consecutive transmembrane segments (helical) span residues 226–246 (TKDL…ALFF), 288–308 (LGGV…PLLN), 320–340 (VTQV…WIGG), and 347–367 (FTTI…ILIP).

Belongs to the cytochrome b family. As to quaternary structure, the cytochrome bc1 complex contains 11 subunits: 3 respiratory subunits (MT-CYB, CYC1 and UQCRFS1), 2 core proteins (UQCRC1 and UQCRC2) and 6 low-molecular weight proteins (UQCRH/QCR6, UQCRB/QCR7, UQCRQ/QCR8, UQCR10/QCR9, UQCR11/QCR10 and a cleavage product of UQCRFS1). This cytochrome bc1 complex then forms a dimer. It depends on heme b as a cofactor.

It localises to the mitochondrion inner membrane. In terms of biological role, component of the ubiquinol-cytochrome c reductase complex (complex III or cytochrome b-c1 complex) that is part of the mitochondrial respiratory chain. The b-c1 complex mediates electron transfer from ubiquinol to cytochrome c. Contributes to the generation of a proton gradient across the mitochondrial membrane that is then used for ATP synthesis. This Akodon montensis (Montane grass mouse) protein is Cytochrome b (MT-CYB).